We begin with the raw amino-acid sequence, 389 residues long: Chalcone synthase 4-1 (389 aa).

Cysteine 164 is an active-site residue.

Belongs to the thiolase-like superfamily. Chalcone/stilbene synthases family.

The enzyme catalyses (E)-4-coumaroyl-CoA + 3 malonyl-CoA + 3 H(+) = 2',4,4',6'-tetrahydroxychalcone + 3 CO2 + 4 CoA. The protein operates within secondary metabolite biosynthesis; flavonoid biosynthesis. The primary product of this enzyme is 4,2',4',6'-tetrahydroxychalcone (also termed naringenin-chalcone or chalcone) which can under specific conditions spontaneously isomerize into naringenin. The sequence is that of Chalcone synthase 4-1 (CHS4-1) from Medicago sativa (Alfalfa).